We begin with the raw amino-acid sequence, 29 residues long: Cytochrome b6-f complex subunit 8 (29 aa).

Residues 3-23 (ILTLGWVSLLVVFTWSIAMVV) form a helical membrane-spanning segment.

Belongs to the PetN family. The 4 large subunits of the cytochrome b6-f complex are cytochrome b6, subunit IV (17 kDa polypeptide, PetD), cytochrome f and the Rieske protein, while the 4 small subunits are PetG, PetL, PetM and PetN. The complex functions as a dimer.

The protein localises to the cellular thylakoid membrane. Component of the cytochrome b6-f complex, which mediates electron transfer between photosystem II (PSII) and photosystem I (PSI), cyclic electron flow around PSI, and state transitions. The protein is Cytochrome b6-f complex subunit 8 of Nostoc punctiforme (strain ATCC 29133 / PCC 73102).